The chain runs to 433 residues: Phosphoglycerate kinase, chloroplastic (433 aa).

A chloroplast-targeting transit peptide spans 1–28; it reads GASFSLHVLSKINSYKSQSTKPIRGVAS. (2R)-3-phosphoglycerate-binding residues include A51, D52, N54, R68, S90, H91, G93, R94, R149, H181, and R182. G227 contacts ADP. Residue G227 participates in CDP binding. The AMP site is built by K229 and K233. K233 is an ATP binding site. G251 provides a ligand contact to ADP. CDP is bound at residue G251. 2 residues coordinate AMP: G252 and G324. ATP-binding residues include G252 and G324. Residues G349 and F354 each contribute to the CDP site. An ADP-binding site is contributed by F354. E355 provides a ligand contact to AMP. ATP is bound by residues E355, D386, and S387. D386 provides a ligand contact to Mg(2+).

This sequence belongs to the phosphoglycerate kinase family. Monomer. Requires Mg(2+) as cofactor.

It localises to the plastid. The protein resides in the chloroplast. It carries out the reaction (2R)-3-phosphoglycerate + ATP = (2R)-3-phospho-glyceroyl phosphate + ADP. Its pathway is carbohydrate biosynthesis; Calvin cycle. This Spinacia oleracea (Spinach) protein is Phosphoglycerate kinase, chloroplastic.